The following is a 154-amino-acid chain: Superoxide dismutase [Cu-Zn] (154 aa).

Cu cation is bound by residues H47, H49, and H64. Cysteines 58 and 147 form a disulfide. Residues H64, H72, H81, and D84 each coordinate Zn(2+). H121 serves as a coordination point for Cu cation. Positions 125–137 are enriched in basic and acidic residues; it reads DDLGRGGNEESKK. The interval 125-147 is disordered; sequence DDLGRGGNEESKKTGNAGPRPAC. R144 provides a ligand contact to substrate.

This sequence belongs to the Cu-Zn superoxide dismutase family. Homodimer. Requires Cu cation as cofactor. Zn(2+) serves as cofactor.

The protein resides in the cytoplasm. It catalyses the reaction 2 superoxide + 2 H(+) = H2O2 + O2. Destroys radicals which are normally produced within the cells and which are toxic to biological systems. In Aspergillus niger (strain ATCC MYA-4892 / CBS 513.88 / FGSC A1513), this protein is Superoxide dismutase [Cu-Zn].